The chain runs to 810 residues: Phenylalanine--tRNA ligase beta subunit (810 aa).

The tRNA-binding domain maps to 40–153; that stretch reads KLPDQKVIVG…EACEIGQPLA (114 aa). A B5 domain is found at 399–480; sequence AAQKIVSLRP…RLYGYNNLEP (82 aa). Asp458, Asp464, Glu467, and Glu468 together coordinate Mg(2+). The region spanning 714–808 is the FDX-ACB domain; that stretch reads SKFPVVERDL…ARSELGAVIR (95 aa).

This sequence belongs to the phenylalanyl-tRNA synthetase beta subunit family. Type 1 subfamily. Tetramer of two alpha and two beta subunits. Mg(2+) serves as cofactor.

It is found in the cytoplasm. It carries out the reaction tRNA(Phe) + L-phenylalanine + ATP = L-phenylalanyl-tRNA(Phe) + AMP + diphosphate + H(+). The chain is Phenylalanine--tRNA ligase beta subunit from Chlorobaculum tepidum (strain ATCC 49652 / DSM 12025 / NBRC 103806 / TLS) (Chlorobium tepidum).